Reading from the N-terminus, the 806-residue chain is NADH:(hydroxy)cinnamate reductase subunit CrdB (806 aa).

Position 257 is an FMN phosphoryl serine (S257). FAD contacts are provided by A310, E329, N337, T338, G342, G343, and D576. R635 functions as the Proton donor in the catalytic mechanism. Positions 742, 771, 786, and 787 each coordinate FAD.

This sequence belongs to the FAD-dependent oxidoreductase 2 family. FRD/SDH subfamily. As to quaternary structure, NADH:(hydroxy)cinnamate reductase Crd is a heterodimer composed of CrdA and CrdB subunits, encoded by adjacent genes. Requires FAD as cofactor. FMN serves as cofactor. In terms of processing, is flavinylated on Ser-257 by ApbE, encoded in a neighboring gene. Covalent attachment of FMN is essential for catalytic activity.

It catalyses the reaction 3-phenylpropanoate + NAD(+) = (E)-cinnamate + NADH + H(+). It carries out the reaction 3-(3,4-dihydroxyphenyl)propanoate + NAD(+) = (E)-caffeate + NADH + H(+). The catalysed reaction is phloretate + NAD(+) = (E)-4-coumarate + NADH + H(+). The enzyme catalyses dihydroferulate + NAD(+) = (E)-ferulate + NADH + H(+). With respect to regulation, is inactivated by molecular oxygen, allowing regulation of Crd activity by medium oxygen level. In terms of biological role, component of the NADH:(hydroxy)cinnamate reductase Crd that catalyzes the reduction of the double bond in cinnamate, p-coumarate, caffeate, and ferulate under anaerobic conditions with NADH or methyl viologen as the electron donor. Is moderately active against acrylate and practically inactive against urocanate, fumarate, methacrylate and crotonate. CrdB is the catalytic subunit that binds substrates. Is likely involved in protecting V.ruber from (hydroxy)cinnamate poisoning. This is NADH:(hydroxy)cinnamate reductase subunit CrdB from Vibrio ruber (strain DSM 16370 / JCM 11486 / BCRC 17186 / CECT 7878 / LMG 23124 / VR1).